The following is a 20-amino-acid chain: Unknown protein NF042 from 2D-PAGE (20 aa).

This chain is Unknown protein NF042 from 2D-PAGE, found in Naegleria fowleri (Brain eating amoeba).